Reading from the N-terminus, the 135-residue chain is Transcription antitermination protein NusB (135 aa).

The tract at residues 115-135 is disordered; that stretch reads ATPAESTGRGSAVDSIPGQPS.

Belongs to the NusB family.

Functionally, involved in transcription antitermination. Required for transcription of ribosomal RNA (rRNA) genes. Binds specifically to the boxA antiterminator sequence of the ribosomal RNA (rrn) operons. The protein is Transcription antitermination protein NusB of Frankia casuarinae (strain DSM 45818 / CECT 9043 / HFP020203 / CcI3).